A 206-amino-acid chain; its full sequence is Ribosomal RNA small subunit methyltransferase G (206 aa).

S-adenosyl-L-methionine is bound by residues G73, L78, 124–125, and R139; that span reads VE.

The protein belongs to the methyltransferase superfamily. RNA methyltransferase RsmG family.

It localises to the cytoplasm. The enzyme catalyses guanosine(527) in 16S rRNA + S-adenosyl-L-methionine = N(7)-methylguanosine(527) in 16S rRNA + S-adenosyl-L-homocysteine. Functionally, specifically methylates the N7 position of guanine in position 527 of 16S rRNA. The sequence is that of Ribosomal RNA small subunit methyltransferase G from Sodalis glossinidius (strain morsitans).